Here is a 314-residue protein sequence, read N- to C-terminus: Lipoyl synthase (314 aa).

[4Fe-4S] cluster-binding residues include C55, C60, C66, C81, C85, C88, and S292. In terms of domain architecture, Radical SAM core spans 67 to 281 (WEDREATFLI…TQYAEGLGFS (215 aa)).

It belongs to the radical SAM superfamily. Lipoyl synthase family. [4Fe-4S] cluster serves as cofactor.

Its subcellular location is the cytoplasm. The enzyme catalyses [[Fe-S] cluster scaffold protein carrying a second [4Fe-4S](2+) cluster] + N(6)-octanoyl-L-lysyl-[protein] + 2 oxidized [2Fe-2S]-[ferredoxin] + 2 S-adenosyl-L-methionine + 4 H(+) = [[Fe-S] cluster scaffold protein] + N(6)-[(R)-dihydrolipoyl]-L-lysyl-[protein] + 4 Fe(3+) + 2 hydrogen sulfide + 2 5'-deoxyadenosine + 2 L-methionine + 2 reduced [2Fe-2S]-[ferredoxin]. Its pathway is protein modification; protein lipoylation via endogenous pathway; protein N(6)-(lipoyl)lysine from octanoyl-[acyl-carrier-protein]: step 2/2. Functionally, catalyzes the radical-mediated insertion of two sulfur atoms into the C-6 and C-8 positions of the octanoyl moiety bound to the lipoyl domains of lipoate-dependent enzymes, thereby converting the octanoylated domains into lipoylated derivatives. This Mycobacterium leprae (strain Br4923) protein is Lipoyl synthase.